Reading from the N-terminus, the 886-residue chain is Alanine--tRNA ligase (886 aa).

The Zn(2+) site is built by H564, H568, C676, and H680.

This sequence belongs to the class-II aminoacyl-tRNA synthetase family. Zn(2+) serves as cofactor.

The protein localises to the cytoplasm. The enzyme catalyses tRNA(Ala) + L-alanine + ATP = L-alanyl-tRNA(Ala) + AMP + diphosphate. Its function is as follows. Catalyzes the attachment of alanine to tRNA(Ala) in a two-step reaction: alanine is first activated by ATP to form Ala-AMP and then transferred to the acceptor end of tRNA(Ala). Also edits incorrectly charged Ser-tRNA(Ala) and Gly-tRNA(Ala) via its editing domain. The sequence is that of Alanine--tRNA ligase from Bartonella bacilliformis.